The following is a 136-amino-acid chain: Pleckstrin homology-like domain family A member 2 (136 aa).

The PH domain maps to 9-103 (ILKEGELEKR…WNAVIAIALV (95 aa)).

The protein belongs to the PHLDA2 family.

It is found in the cytoplasm. The protein resides in the membrane. Its function is as follows. Plays a role in regulating placenta growth. May act via its PH domain that competes with other PH domain-containing proteins, thereby preventing their binding to membrane lipids. The polypeptide is Pleckstrin homology-like domain family A member 2 (phlda2) (Danio rerio (Zebrafish)).